Here is a 264-residue protein sequence, read N- to C-terminus: Glutamate racemase (264 aa).

Substrate-binding positions include 10–11 (DS) and 42–43 (YG). Residue C73 is the Proton donor/acceptor of the active site. 74 to 75 (NT) contacts substrate. C181 (proton donor/acceptor) is an active-site residue. 182 to 183 (TH) is a substrate binding site.

Belongs to the aspartate/glutamate racemases family.

It catalyses the reaction L-glutamate = D-glutamate. The protein operates within cell wall biogenesis; peptidoglycan biosynthesis. Provides the (R)-glutamate required for cell wall biosynthesis. The chain is Glutamate racemase from Thermoanaerobacter sp. (strain X514).